Here is a 63-residue protein sequence, read N- to C-terminus: Large ribosomal subunit protein bL28 (63 aa).

It belongs to the bacterial ribosomal protein bL28 family.

The chain is Large ribosomal subunit protein bL28 from Alkaliphilus metalliredigens (strain QYMF).